The sequence spans 146 residues: MAGPLRAPLLLLAILAVALAVSPAAGASPGKPPRLVGGPMDASVEEEGVRRALDFAVSEYNKASNDMYHSRALQVVRARKQIVAGVNYFLDVELGRTTCTKTQPNLDNCPFHEQPHLKRKAFCSFQIYTVPWQGTMTLSKSTCQDA.

A signal peptide spans 1-26; the sequence is MAGPLRAPLLLLAILAVALAVSPAAG. Serine 43 bears the Phosphoserine mark. The Secondary area of contact motif lies at 81–85; sequence QIVAG. Cystine bridges form between cysteine 99–cysteine 109 and cysteine 123–cysteine 143.

The protein belongs to the cystatin family.

It is found in the secreted. As an inhibitor of cysteine proteinases, this protein is thought to serve an important physiological role as a local regulator of this enzyme activity. In Macaca mulatta (Rhesus macaque), this protein is Cystatin-C (CST3).